We begin with the raw amino-acid sequence, 137 residues long: uncharacterized protein (137 aa).

The signal sequence occupies residues M1–G21. C22 carries the N-palmitoyl cysteine lipid modification. C22 carries S-diacylglycerol cysteine lipidation.

Its subcellular location is the membrane. This is an uncharacterized protein from Escherichia coli (strain K12).